The chain runs to 545 residues: Glucose-6-phosphate isomerase (545 aa).

Residue Glu-351 is the Proton donor of the active site. Residues His-382 and Lys-510 contribute to the active site.

Belongs to the GPI family.

The protein localises to the cytoplasm. The enzyme catalyses alpha-D-glucose 6-phosphate = beta-D-fructose 6-phosphate. It participates in carbohydrate biosynthesis; gluconeogenesis. The protein operates within carbohydrate degradation; glycolysis; D-glyceraldehyde 3-phosphate and glycerone phosphate from D-glucose: step 2/4. Functionally, catalyzes the reversible isomerization of glucose-6-phosphate to fructose-6-phosphate. The sequence is that of Glucose-6-phosphate isomerase from Shewanella halifaxensis (strain HAW-EB4).